A 176-amino-acid polypeptide reads, in one-letter code: Ribosome maturation factor RimM (176 aa).

The PRC barrel domain occupies 93-166 (EGEYYHADLI…RVVIELPAEI (74 aa)).

Belongs to the RimM family. In terms of assembly, binds ribosomal protein uS19.

The protein localises to the cytoplasm. An accessory protein needed during the final step in the assembly of 30S ribosomal subunit, possibly for assembly of the head region. Essential for efficient processing of 16S rRNA. May be needed both before and after RbfA during the maturation of 16S rRNA. It has affinity for free ribosomal 30S subunits but not for 70S ribosomes. This chain is Ribosome maturation factor RimM, found in Rhodopseudomonas palustris (strain BisB18).